We begin with the raw amino-acid sequence, 145 residues long: UPF0735 ACT domain-containing protein CLH_2637 (145 aa).

The 76-residue stretch at 69-144 (TFNLIVKDQT…YVEKIEFVAM (76 aa)) folds into the ACT domain.

It belongs to the UPF0735 family.

The polypeptide is UPF0735 ACT domain-containing protein CLH_2637 (Clostridium botulinum (strain Alaska E43 / Type E3)).